The primary structure comprises 354 residues: Malate dehydrogenase 1, peroxisomal (354 aa).

The segment at 6-14 (RIARISAHL) is peroxisomal targeting signal PTS2. NAD(+) is bound by residues 49-55 (GAAGGIG) and Asp75. Positions 122 and 128 each coordinate substrate. Residues Asn135 and 158 to 160 (ISN) each bind NAD(+). 2 residues coordinate substrate: Asn160 and Arg194. His218 serves as the catalytic Proton acceptor. Met269 serves as a coordination point for NAD(+).

This sequence belongs to the LDH/MDH superfamily. MDH type 1 family. As to quaternary structure, homodimer. In terms of tissue distribution, expressed in rosette leaves at low levels.

Its subcellular location is the peroxisome. The catalysed reaction is (S)-malate + NAD(+) = oxaloacetate + NADH + H(+). Functionally, catalyzes a reversible NAD-dependent dehydrogenase reaction involved in central metabolism and redox homeostasis between organelle compartments. Peroxisomal NAD-dependent malate dehydrogenase involved in fatty acid beta-oxidation. Reoxidizes NADH from the beta-oxidation and provides NAD for the conversion of fatty acyl-CoA to acetyl-CoA. Does not participate directly in the glyoxylate cycle. Required for maintenance of photosynthetic rates under photorespiratory conditions, and carbon flow during photorespiration. Supplies NADH reductant to the peroxisomal hydroxypyruvate reductase (HPR), which reduces hydroxypyruvate into glycerate in the photorespiratory cycle. This is Malate dehydrogenase 1, peroxisomal from Arabidopsis thaliana (Mouse-ear cress).